The primary structure comprises 74 residues: Conotoxin AbVII (74 aa).

Positions 1-17 (VLIIAVLFLTACQLTTA) are cleaved as a signal peptide. Positions 18–40 (ETSSRGKQKHRALRSTDKNSRMT) are excised as a propeptide. The disordered stretch occupies residues 19–41 (TSSRGKQKHRALRSTDKNSRMTK). Cystine bridges form between Cys-43–Cys-57, Cys-50–Cys-61, and Cys-56–Cys-68.

It belongs to the conotoxin O1 superfamily. In terms of tissue distribution, expressed by the venom duct.

Its subcellular location is the secreted. In Conus abbreviatus (Abbreviated cone), this protein is Conotoxin AbVII.